Reading from the N-terminus, the 140-residue chain is Hemoglobin subunit alpha-D (140 aa).

Residues 1–140 enclose the Globin domain; the sequence is MLTDSDKKLV…VCTVLAEKYR (140 aa). Residues His-57 and His-86 each coordinate heme b.

It belongs to the globin family. Heterotetramer of two alpha-D chains and two beta chains. Red blood cells.

In terms of biological role, involved in oxygen transport from the lung to the various peripheral tissues. This chain is Hemoglobin subunit alpha-D (HBAD), found in Columba livia (Rock dove).